The primary structure comprises 72 residues: Small, acid-soluble spore protein C (72 aa).

It belongs to the alpha/beta-type SASP family.

Its function is as follows. SASP are bound to spore DNA. They are double-stranded DNA-binding proteins that cause DNA to change to an a-like conformation. They protect the DNA backbone from chemical and enzymatic cleavage and are thus involved in dormant spore's high resistance to UV light. The sequence is that of Small, acid-soluble spore protein C (sasP-C) from Priestia megaterium (Bacillus megaterium).